The primary structure comprises 81 residues: Costars family protein ABRACL (81 aa).

An N-acetylmethionine modification is found at M1.

The protein belongs to the costars family.

The protein is Costars family protein ABRACL (ABRACL) of Homo sapiens (Human).